Reading from the N-terminus, the 120-residue chain is MASPKETLQRRAARVRRQVKAVANGRPRLSVHRSSKNIYAQIIDDVRGVTLAAASTLDGDLKGKLKTGADSAAAAAVGKLVAERAVKAGVKDVVFDRGAFIYHGRVKALAEAAREGGLSF.

The protein belongs to the universal ribosomal protein uL18 family. Part of the 50S ribosomal subunit; part of the 5S rRNA/L5/L18/L25 subcomplex. Contacts the 5S and 23S rRNAs.

Its function is as follows. This is one of the proteins that bind and probably mediate the attachment of the 5S RNA into the large ribosomal subunit, where it forms part of the central protuberance. The chain is Large ribosomal subunit protein uL18 from Brucella abortus (strain S19).